A 448-amino-acid polypeptide reads, in one-letter code: Phosphoglucosamine mutase (448 aa).

The Phosphoserine intermediate role is filled by Ser100. The Mg(2+) site is built by Ser100, Asp240, Asp242, and Asp244. Ser100 carries the phosphoserine modification.

It belongs to the phosphohexose mutase family. The cofactor is Mg(2+). Post-translationally, activated by phosphorylation.

The catalysed reaction is alpha-D-glucosamine 1-phosphate = D-glucosamine 6-phosphate. Functionally, catalyzes the conversion of glucosamine-6-phosphate to glucosamine-1-phosphate. The sequence is that of Phosphoglucosamine mutase from Clostridioides difficile (strain 630) (Peptoclostridium difficile).